A 1094-amino-acid polypeptide reads, in one-letter code: DNA polymerase delta catalytic subunit (1094 aa).

Residues cysteine 1003, cysteine 1006, cysteine 1016, and cysteine 1019 each coordinate Zn(2+). The CysA-type zinc finger occupies cysteine 1003–cysteine 1019. [4Fe-4S] cluster contacts are provided by cysteine 1049, cysteine 1052, cysteine 1062, and cysteine 1067. A CysB motif motif is present at residues cysteine 1049–cysteine 1067.

The protein belongs to the DNA polymerase type-B family. As to quaternary structure, heterodimer composed of a catalytic subunit POLD and a small regulatory subunit. Requires [4Fe-4S] cluster as cofactor. Mg(2+) is required as a cofactor.

The protein localises to the nucleus. It catalyses the reaction DNA(n) + a 2'-deoxyribonucleoside 5'-triphosphate = DNA(n+1) + diphosphate. The small regulatory subunit delta and PCNA1 increase POLD catalytic activity. This polymerase possesses two enzymatic activities: DNA synthesis (polymerase) and an exonucleolytic activity that degrades single-stranded DNA in the 3'- to 5'-direction. The sequence is that of DNA polymerase delta catalytic subunit (POLD) from Plasmodium falciparum (isolate K1 / Thailand).